The sequence spans 564 residues: Proline--tRNA ligase (564 aa).

It belongs to the class-II aminoacyl-tRNA synthetase family. ProS type 1 subfamily. Homodimer.

It is found in the cytoplasm. It catalyses the reaction tRNA(Pro) + L-proline + ATP = L-prolyl-tRNA(Pro) + AMP + diphosphate. Functionally, catalyzes the attachment of proline to tRNA(Pro) in a two-step reaction: proline is first activated by ATP to form Pro-AMP and then transferred to the acceptor end of tRNA(Pro). As ProRS can inadvertently accommodate and process non-cognate amino acids such as alanine and cysteine, to avoid such errors it has two additional distinct editing activities against alanine. One activity is designated as 'pretransfer' editing and involves the tRNA(Pro)-independent hydrolysis of activated Ala-AMP. The other activity is designated 'posttransfer' editing and involves deacylation of mischarged Ala-tRNA(Pro). The misacylated Cys-tRNA(Pro) is not edited by ProRS. This Bacillus velezensis (strain DSM 23117 / BGSC 10A6 / LMG 26770 / FZB42) (Bacillus amyloliquefaciens subsp. plantarum) protein is Proline--tRNA ligase.